Here is a 250-residue protein sequence, read N- to C-terminus: ATP synthase subunit a (250 aa).

The next 6 membrane-spanning stretches (helical) occupy residues Ala29–Ser49, Phe84–Phe104, Ile114–Tyr134, Val143–Ile163, Phe193–Ile213, and Val216–Leu236.

It belongs to the ATPase A chain family. In terms of assembly, F-type ATPases have 2 components, CF(1) - the catalytic core - and CF(0) - the membrane proton channel. CF(1) has five subunits: alpha(3), beta(3), gamma(1), delta(1), epsilon(1). CF(0) has three main subunits: a(1), b(2) and c(9-12). The alpha and beta chains form an alternating ring which encloses part of the gamma chain. CF(1) is attached to CF(0) by a central stalk formed by the gamma and epsilon chains, while a peripheral stalk is formed by the delta and b chains.

The protein resides in the cell inner membrane. In terms of biological role, key component of the proton channel; it plays a direct role in the translocation of protons across the membrane. The chain is ATP synthase subunit a from Rhizobium leguminosarum bv. trifolii (strain WSM2304).